The sequence spans 156 residues: MNVIEGGVAAPNAKIAIVISRFNSFINESLLSGAIDTLKRFGQVSEENITVVRCPGAVELPLVAQRVAKTAKYDAIVSLGSVIRGGTPHFEYVCSECNKGLAQVSLEYSIPVAFGVLTVDTIDQAIERAGTKAGNKGAEAALSALEMINVLSQIES.

5-amino-6-(D-ribitylamino)uracil is bound by residues phenylalanine 22, 57-59 (AVE), and 81-83 (SVI). 86–87 (GT) is a (2S)-2-hydroxy-3-oxobutyl phosphate binding site. Residue histidine 89 is the Proton donor of the active site. Phenylalanine 114 contacts 5-amino-6-(D-ribitylamino)uracil. Arginine 128 contributes to the (2S)-2-hydroxy-3-oxobutyl phosphate binding site.

This sequence belongs to the DMRL synthase family. As to quaternary structure, forms an icosahedral capsid composed of 60 subunits, arranged as a dodecamer of pentamers.

The catalysed reaction is (2S)-2-hydroxy-3-oxobutyl phosphate + 5-amino-6-(D-ribitylamino)uracil = 6,7-dimethyl-8-(1-D-ribityl)lumazine + phosphate + 2 H2O + H(+). Its pathway is cofactor biosynthesis; riboflavin biosynthesis; riboflavin from 2-hydroxy-3-oxobutyl phosphate and 5-amino-6-(D-ribitylamino)uracil: step 1/2. In terms of biological role, catalyzes the formation of 6,7-dimethyl-8-ribityllumazine by condensation of 5-amino-6-(D-ribitylamino)uracil with 3,4-dihydroxy-2-butanone 4-phosphate. This is the penultimate step in the biosynthesis of riboflavin. This is 6,7-dimethyl-8-ribityllumazine synthase from Aliivibrio salmonicida (strain LFI1238) (Vibrio salmonicida (strain LFI1238)).